The following is a 525-amino-acid chain: cAMP-dependent protein kinase regulatory subunit (525 aa).

The dimerization and phosphorylation stretch occupies residues 28-213 (QFCANWFNSK…RIRGSIGNNL (186 aa)). Disordered regions lie at residues 114–146 (MDAS…SSLG) and 170–196 (SVSA…TVIP). A compositionally biased stretch (low complexity) spans 124–146 (PAPATPAAPAAPAAPAAPFSSLG). At Ser-170 the chain carries Phosphoserine; by autocatalysis. Residues 214–345 (LFRN…FLMD) and 348–472 (LFER…TYGD) each bind a nucleoside 3',5'-cyclic phosphate. 3 residues coordinate 3',5'-cyclic AMP: Glu-295, Arg-304, and Glu-417. Positions 497 to 525 (SGADTSFPHPMDSSAKPGEGAWSAPNPFA) are disordered.

Belongs to the cAMP-dependent kinase regulatory chain family. As to quaternary structure, tetramer, composed of 2 regulatory (R) and 2 catalytic (C) subunits. In the presence of cAMP it dissociates into 2 active monomeric C subunits and an R dimer.

In Mycosarcoma maydis (Corn smut fungus), this protein is cAMP-dependent protein kinase regulatory subunit (PKAR).